Reading from the N-terminus, the 475-residue chain is tRNA modification GTPase MnmE (475 aa).

(6S)-5-formyl-5,6,7,8-tetrahydrofolate contacts are provided by Arg-32, Glu-97, and Lys-136. Residues 232–396 enclose the TrmE-type G domain; the sequence is GVATVIAGRP…LKSRMSSMVE (165 aa). Residues 242–247, 261–267, 286–289, and 377–379 each bind GTP; these read NAGKST, SHMPGTT, DTAG, and SAR. The Mg(2+) site is built by Ser-246 and Thr-267. Lys-475 lines the (6S)-5-formyl-5,6,7,8-tetrahydrofolate pocket.

The protein belongs to the TRAFAC class TrmE-Era-EngA-EngB-Septin-like GTPase superfamily. TrmE GTPase family. As to quaternary structure, homodimer. Heterotetramer of two MnmE and two MnmG subunits. K(+) is required as a cofactor.

The protein localises to the cytoplasm. Exhibits a very high intrinsic GTPase hydrolysis rate. Involved in the addition of a carboxymethylaminomethyl (cmnm) group at the wobble position (U34) of certain tRNAs, forming tRNA-cmnm(5)s(2)U34. This chain is tRNA modification GTPase MnmE, found in Chlorobium phaeobacteroides (strain DSM 266 / SMG 266 / 2430).